A 185-amino-acid chain; its full sequence is Ribosome-recycling factor (185 aa).

This sequence belongs to the RRF family.

The protein localises to the cytoplasm. In terms of biological role, responsible for the release of ribosomes from messenger RNA at the termination of protein biosynthesis. May increase the efficiency of translation by recycling ribosomes from one round of translation to another. The polypeptide is Ribosome-recycling factor (Streptococcus pyogenes serotype M1).